Reading from the N-terminus, the 327-residue chain is MQQLTEIVAQALAEVANASDLKALDDIRVDYLGKKGKITDMMKMMGSLSAEEKPAFGQAVNQAKQAVQQTLSERIDGLKASELEAKLIAEKIDVTLPGRTLELGGLHPVTRTIERIETFFGELGFVVKQGPEIEDDFHNFDALNISEHHPARADHDTFYFNPKVMLRTQTSGVQIRTMEHEKPPLRIISPGRVYRNDYDQTHTPMFHQVEGLMVAENVNFAELKGILHDFLRNFFEEDLQVRFRPSYFPFTEPSAEVDVMGKNGKWLEVLGCGMVHPNVLRSVGIDPEKYSGFAFGMGVERLTMLRYGVNDLRAFFENDLRFLKQFK.

Glutamate 252 is a Mg(2+) binding site.

It belongs to the class-II aminoacyl-tRNA synthetase family. Phe-tRNA synthetase alpha subunit type 1 subfamily. Tetramer of two alpha and two beta subunits. Mg(2+) serves as cofactor.

The protein resides in the cytoplasm. It carries out the reaction tRNA(Phe) + L-phenylalanine + ATP = L-phenylalanyl-tRNA(Phe) + AMP + diphosphate + H(+). The chain is Phenylalanine--tRNA ligase alpha subunit from Shewanella denitrificans (strain OS217 / ATCC BAA-1090 / DSM 15013).